Consider the following 628-residue polypeptide: 1-deoxy-D-xylulose-5-phosphate synthase (628 aa).

Thiamine diphosphate contacts are provided by residues histidine 72 and 113–115; that span reads GHS. A Mg(2+)-binding site is contributed by aspartate 144. Thiamine diphosphate-binding positions include 145–146, asparagine 173, tyrosine 284, and glutamate 367; that span reads GA. Asparagine 173 lines the Mg(2+) pocket.

It belongs to the transketolase family. DXPS subfamily. In terms of assembly, homodimer. The cofactor is Mg(2+). Thiamine diphosphate serves as cofactor.

It catalyses the reaction D-glyceraldehyde 3-phosphate + pyruvate + H(+) = 1-deoxy-D-xylulose 5-phosphate + CO2. The protein operates within metabolic intermediate biosynthesis; 1-deoxy-D-xylulose 5-phosphate biosynthesis; 1-deoxy-D-xylulose 5-phosphate from D-glyceraldehyde 3-phosphate and pyruvate: step 1/1. Catalyzes the acyloin condensation reaction between C atoms 2 and 3 of pyruvate and glyceraldehyde 3-phosphate to yield 1-deoxy-D-xylulose-5-phosphate (DXP). This chain is 1-deoxy-D-xylulose-5-phosphate synthase, found in Exiguobacterium sibiricum (strain DSM 17290 / CCUG 55495 / CIP 109462 / JCM 13490 / 255-15).